The sequence spans 42 residues: Large ribosomal subunit protein bL36 (42 aa).

Belongs to the bacterial ribosomal protein bL36 family.

The protein is Large ribosomal subunit protein bL36 of Wolbachia sp. subsp. Brugia malayi (strain TRS).